Consider the following 151-residue polypeptide: MKVIFIKDMKGKGKRGEVKNVPDGYAQNFLIKNGYAKEATSSNLNTLKRVQKAEKDAYEAEKAAAEDIKKKLEDDKTIVNFKSKAGTDSRLFGSISSKKIVEGLEKQYGIKVDKRKLELPEPIKSLGYTNVPVKLFKGVEAVIRVHITEQD.

This sequence belongs to the bacterial ribosomal protein bL9 family.

In terms of biological role, binds to the 23S rRNA. This Lactobacillus johnsonii (strain CNCM I-12250 / La1 / NCC 533) protein is Large ribosomal subunit protein bL9.